The following is a 709-amino-acid chain: MARGEDSSSVQVLYQLSWDGKLEHPHMIEVHYPPNQGGLRLRDVKKRLTTLRGHGINDSFSWSSKRNYKNEFIWNDLCDDDVIQPLRGSGEYVLRASELFDTFTNKPWEHPSKHSNERMQSSRTMSVDNVTLQQGLINVKLHSGALAREDDQPSGEKLCCSGRRSCINLEDCSSKGVAIDIPKNLQNLSVDQETIDVEKSDFCLSSSDNEVSPRLKTAADCITPVKDVGLVVMTRSTTVHGLHTPAPRSLTSPTEPPFSPGSAKRMWKKEIRKSLFRTSRNSSNVNPVLSGENAALDVDVPPITLSTQEDVSFWRDGRSKSASPSSLNELREVQNEKEKEAEQSTSQLIRLLWARWTGGSSKGKRTPQSTCEDPLPKSPEAKQMPRSRTKTPCKEIRSTNHIAGSLPVTCPSPAVDNKAHSSLDRQEIPPQEECKNRPSPMTLQSCEEITSPVTEIEQDVEIGDIKAIVEEQASNKFPEPEFQQNLRTEQIVLSVQIPDLHIDALDSPTSDTQGSPAEADIPKSATARVKTSNSLPRVKTTTSPKPLPPGFHKGTNDTKPVQIITPRRTPRTSIPLASPPPLVRTFNRVSVRSLSSIAAITLSPENDSAASNLSPENPIVKKRINFRERDEMPLIPGLTTLDWEKALQEAVTDCLPPPNFREILQECSTCGRTFKPDSLQVHMRGCHPPQYARAFSARASPHVVRSRAS.

The tract at residues 8-101 (SSVQVLYQLS…YVLRASELFD (94 aa)) is DIX-like oligomerization domain. 5 disordered regions span residues 242–266 (LHTP…AKRM), 315–344 (RDGR…AEQS), 358–393 (GGSS…KTPC), 411–439 (PSPA…NRPS), and 506–560 (DSPT…DTKP). The segment covering 329-342 (ELREVQNEKEKEAE) has biased composition (basic and acidic residues). Basic and acidic residues predominate over residues 417-436 (NKAHSSLDRQEIPPQEECKN). Residues 529 to 544 (VKTSNSLPRVKTTTSP) show a composition bias toward polar residues. A C2HC/C3H-type zinc finger spans residues 663-692 (ILQECSTCGRTFKPDSLQVHMRGCHPPQYA). Cysteine 667, cysteine 670, histidine 682, and cysteine 686 together coordinate Zn(2+).

This sequence belongs to the SOSEKI family. In terms of assembly, homodimer. Forms long polymer filaments with other SOKs proteins polymers crucial for polar localization and biological activity. The cofactor is Zn(2+).

Its subcellular location is the cell membrane. Functionally, SOSEKI proteins locally interpret global polarity cues and can influence cell division orientation to coordinate cell polarization relative to body axes. This Physcomitrium patens (Spreading-leaved earth moss) protein is Protein SOSEKI 3.